Here is a 370-residue protein sequence, read N- to C-terminus: 3-isopropylmalate dehydrogenase (370 aa).

77–90 (GPKWDSVPYEVRPE) contributes to the NAD(+) binding site. Residues R97, R107, R135, and D226 each contribute to the substrate site. D226, D250, and D254 together coordinate Mg(2+). 290–302 (GSAPDIAGKGIAN) serves as a coordination point for NAD(+).

This sequence belongs to the isocitrate and isopropylmalate dehydrogenases family. LeuB type 1 subfamily. As to quaternary structure, homodimer. The cofactor is Mg(2+). It depends on Mn(2+) as a cofactor.

It is found in the cytoplasm. It carries out the reaction (2R,3S)-3-isopropylmalate + NAD(+) = 4-methyl-2-oxopentanoate + CO2 + NADH. It participates in amino-acid biosynthesis; L-leucine biosynthesis; L-leucine from 3-methyl-2-oxobutanoate: step 3/4. In terms of biological role, catalyzes the oxidation of 3-carboxy-2-hydroxy-4-methylpentanoate (3-isopropylmalate) to 3-carboxy-4-methyl-2-oxopentanoate. The product decarboxylates to 4-methyl-2 oxopentanoate. This chain is 3-isopropylmalate dehydrogenase, found in Rhizobium etli (strain ATCC 51251 / DSM 11541 / JCM 21823 / NBRC 15573 / CFN 42).